The chain runs to 196 residues: MTASVLVGAAARLPLVTAELDALLRQVAQRDAEAFAAFYDQTRARVYGLITRVLRDPGYSEETTQDVYLQVWRNAAGYDPSVGSALSWLLTLAHRRAVDRVRSEQAASTRESRYGAISVDPPSDHVADDVLLDDERRRVAGCLDSLTDVQRECIQLAYYDGLTYAQVADRLAANLATIKSRMRDGIRALRKCLGVA.

The tract at residues 39–105 (YDQTRARVYG…RAVDRVRSEQ (67 aa)) is sigma-70 factor domain-2. The Polymerase core binding signature appears at 62–65 (ETTQ). A sigma-70 factor domain-4 region spans residues 142 to 191 (CLDSLTDVQRECIQLAYYDGLTYAQVADRLAANLATIKSRMRDGIRALRK). The segment at residues 164–183 (YAQVADRLAANLATIKSRMR) is a DNA-binding region (H-T-H motif).

This sequence belongs to the sigma-70 factor family. ECF subfamily. As to quaternary structure, interacts transiently with the RNA polymerase catalytic core formed by RpoA, RpoB, RpoC and RpoZ (2 alpha, 1 beta, 1 beta' and 1 omega subunit) to form the RNA polymerase holoenzyme that can initiate transcription. Interacts (via sigma-70 factor domain 4) with anti-sigma-K factor RskA.

In terms of biological role, sigma factors are initiation factors that promote the attachment of RNA polymerase to specific initiation sites and are then released. Extracytoplasmic function (ECF) sigma factors are held in an inactive form by an anti-sigma factor until released by regulated intramembrane proteolysis. This Mycolicibacterium vanbaalenii (strain DSM 7251 / JCM 13017 / BCRC 16820 / KCTC 9966 / NRRL B-24157 / PYR-1) (Mycobacterium vanbaalenii) protein is ECF RNA polymerase sigma factor SigK (sigK).